The following is a 205-amino-acid chain: Urease accessory protein UreG (205 aa).

Position 14-21 (14-21) interacts with GTP; the sequence is GPVGSGKT.

The protein belongs to the SIMIBI class G3E GTPase family. UreG subfamily. In terms of assembly, homodimer. UreD, UreF and UreG form a complex that acts as a GTP-hydrolysis-dependent molecular chaperone, activating the urease apoprotein by helping to assemble the nickel containing metallocenter of UreC. The UreE protein probably delivers the nickel.

Its subcellular location is the cytoplasm. Its function is as follows. Facilitates the functional incorporation of the urease nickel metallocenter. This process requires GTP hydrolysis, probably effectuated by UreG. In Proteus mirabilis (strain HI4320), this protein is Urease accessory protein UreG.